The chain runs to 235 residues: Carbohydrate deacetylase (235 aa).

Residues histidine 61 and histidine 124 each coordinate Mg(2+).

This sequence belongs to the YdjC deacetylase family. The cofactor is Mg(2+).

Its function is as follows. Probably catalyzes the deacetylation of acetylated carbohydrates an important step in the degradation of oligosaccharides. This is Carbohydrate deacetylase from Bacillus cereus (strain B4264).